The sequence spans 187 residues: UPF0302 protein SERP1032 (187 aa).

It belongs to the UPF0302 family.

This chain is UPF0302 protein SERP1032, found in Staphylococcus epidermidis (strain ATCC 35984 / DSM 28319 / BCRC 17069 / CCUG 31568 / BM 3577 / RP62A).